Reading from the N-terminus, the 318-residue chain is Transaldolase (318 aa).

K132 (schiff-base intermediate with substrate) is an active-site residue.

It belongs to the transaldolase family. Type 1 subfamily. Homodimer.

It localises to the cytoplasm. The catalysed reaction is D-sedoheptulose 7-phosphate + D-glyceraldehyde 3-phosphate = D-erythrose 4-phosphate + beta-D-fructose 6-phosphate. The protein operates within carbohydrate degradation; pentose phosphate pathway; D-glyceraldehyde 3-phosphate and beta-D-fructose 6-phosphate from D-ribose 5-phosphate and D-xylulose 5-phosphate (non-oxidative stage): step 2/3. Transaldolase is important for the balance of metabolites in the pentose-phosphate pathway. This is Transaldolase from Shewanella putrefaciens (strain CN-32 / ATCC BAA-453).